The sequence spans 244 residues: Cyclin-Q (244 aa).

The protein belongs to the cyclin family. Cyclin-like FAM58 subfamily.

Functionally, may be an activating cyclin for the cyclin-associated kinase CDK10. In Xenopus laevis (African clawed frog), this protein is Cyclin-Q (ccnq).